A 1077-amino-acid chain; its full sequence is Receptor-like protein 1 (1077 aa).

A signal peptide spans 1-38 (MRTDERRRWWVKPKKHITLVFITITMIIQFQMKGCVSC). The N-cap stretch occupies residues 39–120 (VETERMGLLQ…SQTRSLNLSL (82 aa)). Residues 39–1024 (VETERMGLLQ…NEEEGNVIDM (986 aa)) lie on the Extracellular side of the membrane. Asn-117, Asn-131, and Asn-139 each carry an N-linked (GlcNAc...) asparagine glycan. LRR repeat units follow at residues 124 to 147 (FPQLQSLNLSWNWFTNLSDHFLGF), 153 to 176 (LDKLTTLDFSHNMFDNSIVPFLNA), 177 to 201 (ATSIRSLHLESNYMEGVFPPQELSN), 202 to 225 (MTNLRVLNLKDNSFSFLSSQGLTD), 227 to 250 (RDLEVLDLSFNGVNDSEASHSLST), 251 to 274 (AKLKTLDLNFNPLSDFSQLKGLES), 275 to 299 (LQELQVLKLRGNKFNHTLSTHVLKD), 300 to 324 (LKMLQELDLSDNGFTNLDHGRGLEI), 326 to 348 (TSLQVLDFKRNQLSLTHEGYLGI), 351 to 376 (LMKLRELDLSSNALTSLPYCLGNLTH), 378 to 397 (RTLDLSNNQLNGNLSSFVSG), and 399 to 424 (PSVLEYLSLLDNNFDGSFLFNSLVNQ). N-linked (GlcNAc...) asparagine glycosylation is present at Asn-201. A glycan (N-linked (GlcNAc...) asparagine) is linked at Asn-240. An N-linked (GlcNAc...) asparagine glycan is attached at Asn-289. Residues Asn-373, Asn-390, and Asn-423 are each glycosylated (N-linked (GlcNAc...) asparagine). An LRR 13; degenerate repeat occupies 425–449 (TRLTVFKLSSKVGVIQVQTESSWAP). LRR repeat units follow at residues 450 to 473 (LFQLKMLYLSNCSLGSTMLGFLVH), 474 to 498 (QRDLCFVDLSHNKLTGTFPTWLVKN), 499 to 522 (NTRLQTILLSGNSLTKLQLPILVH), 524 to 545 (LQVLDISSNMIYDSIQEDIGMV), 546 to 570 (FPNLRFMNFSSNHFQGTIPSSIGEM), 572 to 594 (SLQVLDMSSNGLYGQLPIMFLSG), 595 to 621 (CYSLRVLKLSNNQLQGKIFSKHANLTG), 623 to 643 (VGLFLDGNNFTGSLEEGLLKS), 644 to 666 (KNLTLLDISDNRFSGMLPLWIGR), 667 to 694 (ISRLSYLYMSGNQLKGPFPFLRQSPWVE), 696 to 713 (MDISHNSFSGSIPRNVNF), 714 to 737 (PSLRELRLQNNEFTGLVPGNLFKA), 739 to 761 (GLEVLDLRNNNFSGKILNTIDQT), 762 to 785 (SKLRILLLRNNSFQTYIPGKICQL), 786 to 808 (SEVGLLDLSHNQFRGPIPSCFSK), 877 to 901 (LRYMHGLDLSSNELSGEIPIEIGDL), 902 to 925 (QNIRSLNLSSNRLTGSIPDSISKL), 927 to 949 (GLESLDLSNNKLDGSIPPALADL), and 951 to 970 (SLGYLNISYNNLSGEIPFKG). 2 N-linked (GlcNAc...) asparagine glycosylation sites follow: Asn-460 and Asn-498. Asn-553 carries an N-linked (GlcNAc...) asparagine glycan. N-linked (GlcNAc...) asparagine glycans are attached at residues Asn-618, Asn-631, and Asn-645. Residues Asn-749 and Asn-771 are each glycosylated (N-linked (GlcNAc...) asparagine). Asn-908 is a glycosylation site (N-linked (GlcNAc...) asparagine). 2 N-linked (GlcNAc...) asparagine glycosylation sites follow: Asn-956 and Asn-961. Positions 971 to 1024 (HLVTFDERSYIGNAHLCGLPTNKNCISQRVPEPPSVSTHAKEEENEEEGNVIDM) are C-cap/acidic domain. The chain crosses the membrane as a helical span at residues 1025–1045 (VWFYWTCAAVYISTSLALFAF). Residues 1046 to 1077 (LYIDSRWSREWFYRVDLCVHHILQFKRSSVCN) are Cytoplasmic-facing.

The protein belongs to the RLP family.

It is found in the cell membrane. Its function is as follows. Involved in plant defense. Confers resistance to the bacterial pathogen Xanthomonas through recognition of the microbe-associated molecular pattern (MAMP) eMax. Functionality seems to depend on the presence of the receptor kinase SOBIR1 as an adapter protein. The protein is Receptor-like protein 1 of Arabidopsis thaliana (Mouse-ear cress).